The following is a 255-amino-acid chain: Probable transcriptional regulatory protein CMS0715 (255 aa).

The protein belongs to the TACO1 family.

The protein resides in the cytoplasm. The polypeptide is Probable transcriptional regulatory protein CMS0715 (Clavibacter sepedonicus (Clavibacter michiganensis subsp. sepedonicus)).